We begin with the raw amino-acid sequence, 187 residues long: Dihydrofolate reductase type A10 (187 aa).

Residues 2 to 174 (NISLIFANEL…YSLSIDKFVR (173 aa)) enclose the DHFR domain.

Belongs to the dihydrofolate reductase family. In terms of assembly, homodimer.

It carries out the reaction (6S)-5,6,7,8-tetrahydrofolate + NADP(+) = 7,8-dihydrofolate + NADPH + H(+). Its pathway is cofactor biosynthesis; tetrahydrofolate biosynthesis; 5,6,7,8-tetrahydrofolate from 7,8-dihydrofolate: step 1/1. Functionally, key enzyme in folate metabolism. Catalyzes an essential reaction for de novo glycine and purine synthesis, and for DNA precursor synthesis. This is Dihydrofolate reductase type A10 (dfrA10) from Escherichia coli.